Here is a 489-residue protein sequence, read N- to C-terminus: Glycogen synthase (489 aa).

Lysine 15 is an ADP-alpha-D-glucose binding site.

The protein belongs to the glycosyltransferase 1 family. Bacterial/plant glycogen synthase subfamily.

The enzyme catalyses [(1-&gt;4)-alpha-D-glucosyl](n) + ADP-alpha-D-glucose = [(1-&gt;4)-alpha-D-glucosyl](n+1) + ADP + H(+). Its pathway is glycan biosynthesis; glycogen biosynthesis. Functionally, synthesizes alpha-1,4-glucan chains using ADP-glucose. This chain is Glycogen synthase, found in Francisella tularensis subsp. holarctica (strain FTNF002-00 / FTA).